Reading from the N-terminus, the 234-residue chain is Small ribosomal subunit protein uS3 (234 aa).

A KH type-2 domain is found at 39 to 109 (IRTLINKHYG…EVRIAIYEVK (71 aa)).

This sequence belongs to the universal ribosomal protein uS3 family. Part of the 30S ribosomal subunit. Forms a tight complex with proteins S10 and S14.

Binds the lower part of the 30S subunit head. Binds mRNA in the 70S ribosome, positioning it for translation. In Coprothermobacter proteolyticus (strain ATCC 35245 / DSM 5265 / OCM 4 / BT), this protein is Small ribosomal subunit protein uS3.